Here is a 562-residue protein sequence, read N- to C-terminus: Potassium-transporting ATPase potassium-binding subunit (562 aa).

12 consecutive transmembrane segments (helical) span residues 6–26 (FLLIASFMLVLLLLARPLGSF), 62–82 (YALAILWFNLLGLALLFALLM), 132–152 (GLAVQNFLSAATGIAVAFALI), 170–190 (VFRITLYVLLPISLLIALFFV), 253–273 (FVQMLAIFLIPCALCFSFGQV), 283–303 (LIWAMSLIFVVAVVVVMYAEL), 327–347 (FGILATSMFSVVTTAASCGAV), 356–376 (ALGGMVPMWLMQIGEVVFGGV), 379–399 (GLYGMLLFVLLTVFIAGLMIG), 416–436 (MTALAILVTPTLVLLGSALAI), 483–503 (LLLAFAMFVGRFGVILPVLAI), and 526–546 (LFIGLLVGTVLLVGALTFVPA).

This sequence belongs to the KdpA family. The system is composed of three essential subunits: KdpA, KdpB and KdpC.

It localises to the cell inner membrane. Its function is as follows. Part of the high-affinity ATP-driven potassium transport (or Kdp) system, which catalyzes the hydrolysis of ATP coupled with the electrogenic transport of potassium into the cytoplasm. This subunit binds the periplasmic potassium ions and delivers the ions to the membrane domain of KdpB through an intramembrane tunnel. The polypeptide is Potassium-transporting ATPase potassium-binding subunit (Serratia proteamaculans (strain 568)).